Consider the following 242-residue polypeptide: Large ribosomal subunit protein uL1 (242 aa).

This sequence belongs to the universal ribosomal protein uL1 family. In terms of assembly, part of the 50S ribosomal subunit.

Functionally, binds directly to 23S rRNA. The L1 stalk is quite mobile in the ribosome, and is involved in E site tRNA release. Its function is as follows. Protein L1 is also a translational repressor protein, it controls the translation of the L11 operon by binding to its mRNA. This is Large ribosomal subunit protein uL1 from Sulfurihydrogenibium sp. (strain YO3AOP1).